The primary structure comprises 559 residues: 2,3-bisphosphoglycerate-independent phosphoglycerate mutase (559 aa).

Residues aspartate 28 and serine 81 each contribute to the Mn(2+) site. The active-site Phosphoserine intermediate is the serine 81. Residues histidine 140, 170-171 (RD), arginine 206, arginine 213, 286-289 (RADR), and lysine 361 each bind substrate. Mn(2+)-binding residues include aspartate 430, histidine 434, aspartate 471, histidine 472, and histidine 501.

The protein belongs to the BPG-independent phosphoglycerate mutase family. Monomer. Mn(2+) serves as cofactor. Post-translationally, the N-terminus is blocked. In terms of tissue distribution, found ubiquitously in germinating seed.

It localises to the cytoplasm. It carries out the reaction (2R)-2-phosphoglycerate = (2R)-3-phosphoglycerate. It functions in the pathway carbohydrate degradation; glycolysis; pyruvate from D-glyceraldehyde 3-phosphate: step 3/5. Functionally, catalyzes the interconversion of 2-phosphoglycerate and 3-phosphoglycerate. This is 2,3-bisphosphoglycerate-independent phosphoglycerate mutase from Zea mays (Maize).